We begin with the raw amino-acid sequence, 414 residues long: F-box protein At3g26010 (414 aa).

Positions 5–52 (NRTIHLTDAIWTEILARLPLRIIARFKSVSKTWKSTIESVYFRRLFVS) constitute an F-box domain.

This chain is F-box protein At3g26010, found in Arabidopsis thaliana (Mouse-ear cress).